The primary structure comprises 395 residues: Ankyrin repeat domain-containing protein 65 (395 aa).

ANK repeat units lie at residues 52 to 81, 85 to 114, 118 to 147, 151 to 180, 185 to 212, 213 to 241, 245 to 274, 278 to 307, 311 to 340, and 344 to 373; these read QAWG…SVEE, AGRT…QVGA, AGRT…PANA, AGLT…PGPT, RGWT…GGAR, LDSV…PVDA, VGAT…DPSL, HGRS…EVDS, LGLT…EINA, and LHKT…SPTL.

The sequence is that of Ankyrin repeat domain-containing protein 65 (ANKRD65) from Bos taurus (Bovine).